The following is a 748-amino-acid chain: Formate acetyltransferase (748 aa).

The region spanning 5-618 (NNHTNAWQGF…KTGNTPDGRK (614 aa)) is the PFL domain. Cysteine 412 serves as the catalytic S-acetylcysteine intermediate. Residue cysteine 413 is the Cysteine radical intermediate of the active site. In terms of domain architecture, Glycine radical spans 625–748 (PGANPMHGRD…VISRTFHESM (124 aa)). Glycine radical is present on glycine 723.

The protein belongs to the glycyl radical enzyme (GRE) family. PFL subfamily. Homodimer.

It is found in the cytoplasm. The catalysed reaction is formate + acetyl-CoA = pyruvate + CoA. It participates in fermentation; pyruvate fermentation; formate from pyruvate: step 1/1. In terms of biological role, catalyzes the conversion of pyruvate to formate and acetyl-CoA. In Staphylococcus epidermidis (strain ATCC 35984 / DSM 28319 / BCRC 17069 / CCUG 31568 / BM 3577 / RP62A), this protein is Formate acetyltransferase (pflB).